Reading from the N-terminus, the 77-residue chain is Serine protease inhibitor 1 (77 aa).

The first 17 residues, 1–17 (MMFTPLIVLTLLVLATA), serve as a signal peptide directing secretion. Intrachain disulfides connect C21-C53, C30-C48, C33-C44, C37-C74, and C55-C68. One can recognise a TIL domain in the interval 21-74 (CGPNEQWSDCPGCELQCGESDKPCPAMCGDPKCYCSPDQYRRIPDGRCIRKIQC).

The protein resides in the secreted. Defends the organism against the host's proteinases. This chain is Serine protease inhibitor 1, found in Anisakis simplex (Herring worm).